An 877-amino-acid chain; its full sequence is Hopanoid transporter HpnN (877 aa).

The Cytoplasmic segment spans residues 1 to 16 (MVTSLIVRLVAWSVRR). Residues 17 to 37 (PVWVVVLSLLIAAFSGVYVAR) form a helical membrane-spanning segment. Topologically, residues 38 to 279 (HFKINTDISK…FSSVEDGAAL (242 aa)) are periplasmic. Residues 280 to 295 (NGVVTLLVVFVILWLA) traverse the membrane as a helical segment. Residues 296 to 299 (LRSK) are Cytoplasmic-facing. A helical transmembrane segment spans residues 300–323 (RMIASVLVTLFVGLVVTAALGLAM). An SSD domain is found at 302 to 428 (IASVLVTLFV…LTLLPALLRL (127 aa)). Residues 324-332 (VGSLNMISV) are Periplasmic-facing. A helical transmembrane segment spans residues 333-351 (AFMVLFVGLGVDFSIQYGV). The Cytoplasmic segment spans residues 352–373 (KYREERFRDERIDHALIGAAHS). The helical transmembrane segment at 374–394 (MGMPLALATTAVAASFFSFIP) threads the bilayer. Residues 395–399 (TAYRG) are Periplasmic-facing. Residues 400-426 (VSELGLIAGVGMFVALLTTLTLLPALL) traverse the membrane as a helical segment. The Cytoplasmic segment spans residues 427–452 (RLFAPPGESKTPGFPWLAPVDDYLDR). The chain crosses the membrane as a helical span at residues 453–472 (HRKPILIGTLAVVIGALPLL). The Periplasmic segment spans residues 473–718 (AFLHFDFNPL…ILHSANTIIS (246 aa)). Residues 719–739 (AFLHAALWSIISITILLWITL) form a helical membrane-spanning segment. Topologically, residues 740–743 (RRFG) are cytoplasmic. The helical transmembrane segment at 744-766 (DVLRTLVPLLVSGIVTLEMCVVL) threads the bilayer. Residues 767–774 (GMSLNFAN) lie on the Periplasmic side of the membrane. A helical transmembrane segment spans residues 775–794 (IIALPLMLGVGVAFKVYFVM). Over 795–809 (AWRAGQTGLLHSSLT) the chain is Cytoplasmic. The chain crosses the membrane as a helical span at residues 810 to 827 (HAVLFSAATTATAFGSLW). The Periplasmic portion of the chain corresponds to 828-836 (LSHHPGTSS). Residues 837-858 (MGKLLALALTCTLIGAVVFQPV) traverse the membrane as a helical segment. Residues 859-877 (LMGKPRVKRAKNQSQGINE) lie on the Cytoplasmic side of the membrane.

The protein belongs to the resistance-nodulation-cell division (RND) (TC 2.A.6) family. MmpL subfamily. In terms of assembly, homodimer.

It localises to the cell inner membrane. Its function is as follows. Essential for hopanoid transport from the cytoplasmic to the outer membrane. Is capable of shuttling hopanoid lipids from the inner membrane to the periplasm, where they probably spontaneously insert to the inner leaflet of the outer membrane, strengthening the cell envelope. May be a proton-motive-force (PMF)-dependent transporter. Is critical for multidrug resistance and cell wall remodeling in Burkholderia. This chain is Hopanoid transporter HpnN, found in Burkholderia multivorans (strain ATCC 17616 / 249).